Here is a 123-residue protein sequence, read N- to C-terminus: Large ribosomal subunit protein uL24 (123 aa).

This sequence belongs to the universal ribosomal protein uL24 family. In terms of assembly, part of the 50S ribosomal subunit.

In terms of biological role, one of two assembly initiator proteins, it binds directly to the 5'-end of the 23S rRNA, where it nucleates assembly of the 50S subunit. Its function is as follows. One of the proteins that surrounds the polypeptide exit tunnel on the outside of the subunit. The sequence is that of Large ribosomal subunit protein uL24 from Solibacter usitatus (strain Ellin6076).